The sequence spans 207 residues: Large ribosomal subunit protein uL4 (207 aa).

A disordered region spans residues 43-85 (SRRQGTHDTKGRSEVRGGGRKPWKQKGTGRARQGSIRSPQWVG). The span at 47–59 (GTHDTKGRSEVRG) shows a compositional bias: basic and acidic residues. Residues 60-71 (GGRKPWKQKGTG) show a composition bias toward basic residues.

This sequence belongs to the universal ribosomal protein uL4 family. Part of the 50S ribosomal subunit.

Functionally, one of the primary rRNA binding proteins, this protein initially binds near the 5'-end of the 23S rRNA. It is important during the early stages of 50S assembly. It makes multiple contacts with different domains of the 23S rRNA in the assembled 50S subunit and ribosome. Forms part of the polypeptide exit tunnel. In Exiguobacterium sibiricum (strain DSM 17290 / CCUG 55495 / CIP 109462 / JCM 13490 / 255-15), this protein is Large ribosomal subunit protein uL4.